A 262-amino-acid polypeptide reads, in one-letter code: Putative glutamine--fructose-6-phosphate aminotransferase [isomerizing] (262 aa).

The active-site Nucleophile; for GATase activity is the Cys-2. Residues 2-262 form the Glutamine amidotransferase type-2 domain; sequence CGIFGYCNFL…RKSPPFVHNT (261 aa).

It carries out the reaction D-fructose 6-phosphate + L-glutamine = D-glucosamine 6-phosphate + L-glutamate. Its pathway is nucleotide-sugar biosynthesis; UDP-N-acetyl-alpha-D-glucosamine biosynthesis; alpha-D-glucosamine 6-phosphate from D-fructose 6-phosphate: step 1/1. Functionally, involved in amino sugar synthesis (formation of chitin, supplies the amino sugars of asparagine-linked oligosaccharides of glycoproteins). The protein is Putative glutamine--fructose-6-phosphate aminotransferase [isomerizing] of Saccharomyces cerevisiae (strain ATCC 204508 / S288c) (Baker's yeast).